Consider the following 503-residue polypeptide: Depupylase (503 aa).

Mg(2+) contacts are provided by Glu-8 and Tyr-92. The Proton acceptor role is filled by Asp-94. Glu-99 serves as a coordination point for Mg(2+). 101–102 (ST) provides a ligand contact to ATP. Position 155 (His-155) interacts with Mg(2+). Positions 157 and 239 each coordinate ATP. Position 241 (His-241) interacts with Mg(2+).

This sequence belongs to the Pup ligase/Pup deamidase family. Pup deamidase subfamily. In terms of assembly, likely interacts with the C-terminal half of the prokaryotic ubiquitin-like protein Pup. ATP serves as cofactor.

It functions in the pathway protein degradation; proteasomal Pup-dependent pathway. Its function is as follows. Displays depupylase (DPUP) activity, removing conjugated Pup from target proteins; is thus involved in the recycling of Pup and may function similarly to deubiquitinases (DUBs) in eukaryotes to prevent or promote proteasomal degradation of certain proteins. Is also able to catalyze the deamidation of the C-terminal glutamine to glutamate in a variant of the prokaryotic ubiquitin-like protein Pup; however, since Pup from A.cellulolyticus possesses a C-terminal glutamate, this deamidase activity may be of no significance in vivo. In Acidothermus cellulolyticus (strain ATCC 43068 / DSM 8971 / 11B), this protein is Depupylase (dop).